We begin with the raw amino-acid sequence, 100 residues long: MKLTSREMEKLMIVVAADLARRRKERGLKLNYPEAVAMITYEVLEGARDGKTVAQLMQYGATILTKEDVMEGVAEMIPDIQIEATFPDGTKLVTVHDPIR.

It belongs to the urease gamma subunit family. In terms of assembly, heterotrimer of UreA (gamma), UreB (beta) and UreC (alpha) subunits. Three heterotrimers associate to form the active enzyme.

The protein resides in the cytoplasm. The enzyme catalyses urea + 2 H2O + H(+) = hydrogencarbonate + 2 NH4(+). It participates in nitrogen metabolism; urea degradation; CO(2) and NH(3) from urea (urease route): step 1/1. This is Urease subunit gamma from Bacillus sp. (strain TB-90).